We begin with the raw amino-acid sequence, 142 residues long: Hemoglobin subunit alpha (142 aa).

Residues 2 to 142 (VLSDANKQEI…LVHQLSSKYR (141 aa)) form the Globin domain. Residue His-60 coordinates O2. His-89 lines the heme b pocket.

Belongs to the globin family. In terms of assembly, heterotetramer of two alpha chains and two beta chains. As to expression, red blood cells.

Its function is as follows. Involved in oxygen transport from gills to the various peripheral tissues. In Bathyraja eatonii (Eaton's skate), this protein is Hemoglobin subunit alpha (HBA).